The chain runs to 291 residues: N-acetylmannosamine kinase (291 aa).

ATP is bound by residues 5–12 (AIDIGGTK) and 132–139 (GVGGGVVS). 4 residues coordinate Zn(2+): His-156, Cys-166, Cys-168, and Cys-173.

This sequence belongs to the ROK (NagC/XylR) family. NanK subfamily. As to quaternary structure, homodimer.

The enzyme catalyses an N-acyl-D-mannosamine + ATP = an N-acyl-D-mannosamine 6-phosphate + ADP + H(+). It functions in the pathway amino-sugar metabolism; N-acetylneuraminate degradation; D-fructose 6-phosphate from N-acetylneuraminate: step 2/5. In terms of biological role, catalyzes the phosphorylation of N-acetylmannosamine (ManNAc) to ManNAc-6-P. This Escherichia fergusonii (strain ATCC 35469 / DSM 13698 / CCUG 18766 / IAM 14443 / JCM 21226 / LMG 7866 / NBRC 102419 / NCTC 12128 / CDC 0568-73) protein is N-acetylmannosamine kinase.